We begin with the raw amino-acid sequence, 166 residues long: Peptidyl-prolyl cis-trans isomerase-like 1 (166 aa).

In terms of domain architecture, PPIase cyclophilin-type spans Gln-10–Pro-164. Residues His-54–Gly-65, Thr-70–Gly-71, Ala-99–Gly-104, Gly-109–Phe-113, Thr-119, and Lys-125 each bind cyclosporin A. Ser-149 bears the Phosphoserine mark.

This sequence belongs to the cyclophilin-type PPIase family. PPIL1 subfamily. Identified in the spliceosome C complex. Interacts with SNW1/SKIP. Interacts with CDC40/PRP17; this interaction leads to CDC40 isomerization. Interacts with RBM22.

Its subcellular location is the nucleus. It carries out the reaction [protein]-peptidylproline (omega=180) = [protein]-peptidylproline (omega=0). Its activity is regulated as follows. Inhibited by Cyclosporin A. Functionally, involved in pre-mRNA splicing as component of the spliceosome. PPIases accelerate the folding of proteins. It catalyzes the cis-trans isomerization of proline imidic peptide bonds in oligopeptides. Catalyzes prolyl peptide bond isomerization in CDC40/PRP17. Plays an important role in embryonic brain development; this function is independent of its isomerase activity. This is Peptidyl-prolyl cis-trans isomerase-like 1 (Ppil1) from Mus musculus (Mouse).